A 272-amino-acid polypeptide reads, in one-letter code: Undecaprenyl-diphosphatase (272 aa).

The next 7 membrane-spanning stretches (helical) occupy residues 2 to 22 (FDII…FLPI), 43 to 63 (FINM…ILLY), 82 to 102 (WQLW…GLPL), 110 to 130 (LHTP…FIIL), 185 to 205 (YVAT…VSIL), 224 to 244 (VLMT…KWLL), and 252 to 272 (FKPF…VMFI).

It belongs to the UppP family.

It localises to the cell membrane. It catalyses the reaction di-trans,octa-cis-undecaprenyl diphosphate + H2O = di-trans,octa-cis-undecaprenyl phosphate + phosphate + H(+). In terms of biological role, catalyzes the dephosphorylation of undecaprenyl diphosphate (UPP). Confers resistance to bacitracin. The protein is Undecaprenyl-diphosphatase of Lacticaseibacillus paracasei (strain ATCC 334 / BCRC 17002 / CCUG 31169 / CIP 107868 / KCTC 3260 / NRRL B-441) (Lactobacillus paracasei).